Reading from the N-terminus, the 314-residue chain is 3'-5' exoribonuclease YhaM (314 aa).

The HD domain maps to 163 to 279; sequence HVVSMLDLAK…LHYIDNLDAK (117 aa).

It belongs to the YhaM family.

In terms of biological role, shows a 3'-5' exoribonuclease activity. The polypeptide is 3'-5' exoribonuclease YhaM (Bacillus cereus (strain AH820)).